A 316-amino-acid chain; its full sequence is Malate dehydrogenase (316 aa).

Residues Gly12–Gly17 and Asp36 contribute to the NAD(+) site. Substrate-binding residues include Arg85 and Arg91. NAD(+) is bound by residues Asn98 and Val121–Asn123. Substrate contacts are provided by Asn123 and Arg154. The Proton acceptor role is filled by His178.

The protein belongs to the LDH/MDH superfamily. MDH type 3 family.

The enzyme catalyses (S)-malate + NAD(+) = oxaloacetate + NADH + H(+). Its function is as follows. Catalyzes the reversible oxidation of malate to oxaloacetate. The protein is Malate dehydrogenase of Wolbachia pipientis wMel.